Reading from the N-terminus, the 366-residue chain is Zinc-regulated GTPase metalloprotein activator 1 (366 aa).

A psi-PxLVp motif motif is present at residues 5–12 (DECPELVP). GTP is bound at residue 31 to 38 (GYLGAGKT). Cys89, Cys91, and Cys92 together coordinate Zn(2+). Residues 89–92 (CLCC) carry the CXCC motif motif. GTP-binding positions include 92-96 (CSVKD) and 185-188 (NKTD). The CobW C-terminal domain maps to 258-357 (TITFEVPGSV…GEILKKEFIS (100 aa)).

It belongs to the SIMIBI class G3E GTPase family. ZNG1 subfamily.

The protein localises to the nucleus. The enzyme catalyses GTP + H2O = GDP + phosphate + H(+). Its function is as follows. Zinc chaperone that directly transfers zinc cofactor to target metalloproteins, thereby activating them. Catalyzes zinc insertion into the active site of methionine aminopeptidase METAP1, which function to cleave the initiator methionine from polypeptides during or after protein translation. Mechanistically, the N-terminal psi-PxLVp motif binds to the C6H2-type zinc finger of inactive form of METAP1. After formation of the docked complex, zinc is transferred from the CXCC motif in the GTPase domain of ZNG1 to the zinc binding site in the peptidase domain of METAP1 in a process requiring GTP hydrolysis. GTP/GDP exchange is required for release of active METAP1. This chain is Zinc-regulated GTPase metalloprotein activator 1, found in Danio rerio (Zebrafish).